Reading from the N-terminus, the 232-residue chain is Triosephosphate isomerase (232 aa).

Residue 6 to 8 (NFK) participates in substrate binding. The active-site Electrophile is the His86. Glu155 serves as the catalytic Proton acceptor. Positions 161 and 191 each coordinate substrate.

Belongs to the triosephosphate isomerase family. In terms of assembly, homodimer.

The protein resides in the cytoplasm. The enzyme catalyses D-glyceraldehyde 3-phosphate = dihydroxyacetone phosphate. Its pathway is carbohydrate biosynthesis; gluconeogenesis. It functions in the pathway carbohydrate degradation; glycolysis; D-glyceraldehyde 3-phosphate from glycerone phosphate: step 1/1. Its function is as follows. Involved in the gluconeogenesis. Catalyzes stereospecifically the conversion of dihydroxyacetone phosphate (DHAP) to D-glyceraldehyde-3-phosphate (G3P). This Nitratiruptor sp. (strain SB155-2) protein is Triosephosphate isomerase.